A 499-amino-acid polypeptide reads, in one-letter code: Probable cytosol aminopeptidase (499 aa).

Residues K269 and D274 each coordinate Mn(2+). The active site involves K281. 3 residues coordinate Mn(2+): D292, D351, and E353. Residue R355 is part of the active site.

Belongs to the peptidase M17 family. Mn(2+) is required as a cofactor.

The protein resides in the cytoplasm. It carries out the reaction Release of an N-terminal amino acid, Xaa-|-Yaa-, in which Xaa is preferably Leu, but may be other amino acids including Pro although not Arg or Lys, and Yaa may be Pro. Amino acid amides and methyl esters are also readily hydrolyzed, but rates on arylamides are exceedingly low.. It catalyses the reaction Release of an N-terminal amino acid, preferentially leucine, but not glutamic or aspartic acids.. Functionally, presumably involved in the processing and regular turnover of intracellular proteins. Catalyzes the removal of unsubstituted N-terminal amino acids from various peptides. The polypeptide is Probable cytosol aminopeptidase (Haemophilus ducreyi (strain 35000HP / ATCC 700724)).